Consider the following 225-residue polypeptide: Large ribosomal subunit protein eL15 (225 aa).

Residues 159-180 (RPFRGLTSAGKKMRGLRKSRGL) form a disordered region. Positions 169 to 180 (KKMRGLRKSRGL) are enriched in basic residues.

The protein belongs to the eukaryotic ribosomal protein eL15 family.

This is Large ribosomal subunit protein eL15 (rpl15e) from Aeropyrum pernix (strain ATCC 700893 / DSM 11879 / JCM 9820 / NBRC 100138 / K1).